Here is a 342-residue protein sequence, read N- to C-terminus: NLP effector protein Pc107869 (342 aa).

The signal sequence occupies residues 1 to 19; it reads MKTGFFLFAACAALVAVQA. A glycan (N-linked (GlcNAc...) asparagine) is linked at N24. Residues 41–125 are disordered; it reads APRTKAPPTK…PTPDPGPWEA (85 aa). The span at 55–75 shows a compositional bias: low complexity; sequence QQSSLSGSQEQQQEQIETPAP. Residues 93 to 121 show a composition bias toward pro residues; it reads TPAPTPAPTPAPTPAPTPAPTPAPTPDPG. Residues 226-232 carry the Hepta-peptide GHRHDWE motif motif; that stretch reads GHRHDWE.

The protein belongs to the Necrosis inducing protein (NPP1) family.

The protein localises to the secreted. Its function is as follows. Secreted effector that contributes strongly to virulence during infection by P.capsici. Induces cell death in the Solanaceae, including Nicotiana benthamiana. The sequence is that of NLP effector protein Pc107869 from Phytophthora capsici.